We begin with the raw amino-acid sequence, 158 residues long: uncharacterized protein (158 aa).

Residues 1–21 (MPHTGSQHTLQATPKTAQHTG) show a composition bias toward polar residues. 2 disordered regions span residues 1 to 89 (MPHT…RVEG) and 107 to 158 (EEEK…DAKT). 2 stretches are compositionally biased toward basic and acidic residues: residues 51-68 (HTEG…DKAG) and 107-127 (EEEK…RESR). Residues 128–137 (QGTAHKSTCM) are compositionally biased toward polar residues. Positions 149-158 (EIGKVEDAKT) are enriched in basic and acidic residues.

This is an uncharacterized protein from Encephalitozoon cuniculi (strain GB-M1) (Microsporidian parasite).